The following is a 318-amino-acid chain: Aspartate carbamoyltransferase catalytic subunit (318 aa).

Carbamoyl phosphate-binding residues include arginine 57 and threonine 58. Lysine 85 lines the L-aspartate pocket. Residues arginine 107, histidine 141, and glutamine 144 each coordinate carbamoyl phosphate. Residues arginine 174 and arginine 228 each contribute to the L-aspartate site. Carbamoyl phosphate contacts are provided by glycine 269 and proline 270.

This sequence belongs to the aspartate/ornithine carbamoyltransferase superfamily. ATCase family. Heterododecamer (2C3:3R2) of six catalytic PyrB chains organized as two trimers (C3), and six regulatory PyrI chains organized as three dimers (R2).

The catalysed reaction is carbamoyl phosphate + L-aspartate = N-carbamoyl-L-aspartate + phosphate + H(+). It functions in the pathway pyrimidine metabolism; UMP biosynthesis via de novo pathway; (S)-dihydroorotate from bicarbonate: step 2/3. Its function is as follows. Catalyzes the condensation of carbamoyl phosphate and aspartate to form carbamoyl aspartate and inorganic phosphate, the committed step in the de novo pyrimidine nucleotide biosynthesis pathway. The sequence is that of Aspartate carbamoyltransferase catalytic subunit from Mycolicibacterium smegmatis (strain ATCC 700084 / mc(2)155) (Mycobacterium smegmatis).